Consider the following 144-residue polypeptide: Large ribosomal subunit protein uL15 (144 aa).

The interval 1-50 (MRLNTLSPAAGAKSAKKRVGRGIGSGLGKTGGRGVKGAGSRSGGGVRAGF) is disordered. Residues 21–50 (RGIGSGLGKTGGRGVKGAGSRSGGGVRAGF) show a composition bias toward gly residues.

The protein belongs to the universal ribosomal protein uL15 family. Part of the 50S ribosomal subunit.

In terms of biological role, binds to the 23S rRNA. The chain is Large ribosomal subunit protein uL15 from Tolumonas auensis (strain DSM 9187 / NBRC 110442 / TA 4).